Consider the following 144-residue polypeptide: Large ribosomal subunit protein uL16 (144 aa).

Positions 1 to 16 are enriched in basic residues; that stretch reads MLVPKRVKHRKVQRGK. The segment at 1-20 is disordered; it reads MLVPKRVKHRKVQRGKMRGE.

It belongs to the universal ribosomal protein uL16 family. Part of the 50S ribosomal subunit.

Binds 23S rRNA and is also seen to make contacts with the A and possibly P site tRNAs. This Limosilactobacillus fermentum (strain NBRC 3956 / LMG 18251) (Lactobacillus fermentum) protein is Large ribosomal subunit protein uL16.